We begin with the raw amino-acid sequence, 161 residues long: MAKKKSKDKAGSNTIAMNKQARHEYFIDDEIEAGIELQGWEVKSLRSGKVNIAESYVYVRDGEIFISGMTITPLQAASTHVIANPTRIRKLLMSRKEIDNLIGRVNREGMTLVATTMYWVRSWAKIKVGVAKGKKLHDKRTDSKEKDWNRDKARIMKSSLR.

Residues 138–161 (DKRTDSKEKDWNRDKARIMKSSLR) form a disordered region. Residues 139-154 (KRTDSKEKDWNRDKAR) are compositionally biased toward basic and acidic residues.

It belongs to the SmpB family.

The protein resides in the cytoplasm. Its function is as follows. Required for rescue of stalled ribosomes mediated by trans-translation. Binds to transfer-messenger RNA (tmRNA), required for stable association of tmRNA with ribosomes. tmRNA and SmpB together mimic tRNA shape, replacing the anticodon stem-loop with SmpB. tmRNA is encoded by the ssrA gene; the 2 termini fold to resemble tRNA(Ala) and it encodes a 'tag peptide', a short internal open reading frame. During trans-translation Ala-aminoacylated tmRNA acts like a tRNA, entering the A-site of stalled ribosomes, displacing the stalled mRNA. The ribosome then switches to translate the ORF on the tmRNA; the nascent peptide is terminated with the 'tag peptide' encoded by the tmRNA and targeted for degradation. The ribosome is freed to recommence translation, which seems to be the essential function of trans-translation. The polypeptide is SsrA-binding protein (Aliivibrio fischeri (strain ATCC 700601 / ES114) (Vibrio fischeri)).